The primary structure comprises 158 residues: UPF0260 protein RL1394 (158 aa).

It belongs to the UPF0260 family.

This Rhizobium johnstonii (strain DSM 114642 / LMG 32736 / 3841) (Rhizobium leguminosarum bv. viciae) protein is UPF0260 protein RL1394.